Here is a 504-residue protein sequence, read N- to C-terminus: ATP synthase subunit alpha (504 aa).

172–179 (GDRQTGKT) provides a ligand contact to ATP.

This sequence belongs to the ATPase alpha/beta chains family. In terms of assembly, F-type ATPases have 2 components, CF(1) - the catalytic core - and CF(0) - the membrane proton channel. CF(1) has five subunits: alpha(3), beta(3), gamma(1), delta(1), epsilon(1). CF(0) has three main subunits: a(1), b(2) and c(9-12). The alpha and beta chains form an alternating ring which encloses part of the gamma chain. CF(1) is attached to CF(0) by a central stalk formed by the gamma and epsilon chains, while a peripheral stalk is formed by the delta and b chains.

The protein localises to the cell inner membrane. The catalysed reaction is ATP + H2O + 4 H(+)(in) = ADP + phosphate + 5 H(+)(out). Functionally, produces ATP from ADP in the presence of a proton gradient across the membrane. The alpha chain is a regulatory subunit. This Petrotoga mobilis (strain DSM 10674 / SJ95) protein is ATP synthase subunit alpha.